A 609-amino-acid chain; its full sequence is Ovochymase-2 (609 aa).

The N-terminal stretch at methionine 1–serine 22 is a signal peptide. Residues glutamate 23 to arginine 51 constitute a propeptide, activation peptide. Residues isoleucine 52–glutamine 299 form the Peptidase S1 domain. An intrachain disulfide couples cysteine 77 to cysteine 93. Residue histidine 92 is the Charge relay system of the active site. Asparagine 104 carries N-linked (GlcNAc...) asparagine glycosylation. Glutamate 119 provides a ligand contact to Ca(2+). Aspartate 142 (charge relay system) is an active-site residue. 4 cysteine pairs are disulfide-bonded: cysteine 176-cysteine 246, cysteine 207-cysteine 225, cysteine 236-cysteine 265, and cysteine 311-cysteine 341. Serine 240 functions as the Charge relay system in the catalytic mechanism. CUB domains follow at residues cysteine 311–leucine 421 and cysteine 431–isoleucine 543. N-linked (GlcNAc...) asparagine glycosylation occurs at asparagine 356. A disulfide bond links cysteine 365 and cysteine 384. Asparagine 415 is a glycosylation site (N-linked (GlcNAc...) asparagine). 2 disulfides stabilise this stretch: cysteine 431-cysteine 458 and cysteine 485-cysteine 506. N-linked (GlcNAc...) asparagine glycosylation is found at asparagine 530 and asparagine 549. The tract at residues histidine 580–histidine 609 is disordered.

This sequence belongs to the peptidase S1 family. Only expressed in uterus tissue. Expressed in the initial segment (IS) of the caput epididymis, the region most proximal to the testis.

It localises to the secreted. In terms of biological role, may be required for sperm ADAM3 processing and consequential sperm fertilizing ability. In vitro, has an endopeptidase activity. The polypeptide is Ovochymase-2 (Mus musculus (Mouse)).